A 416-amino-acid chain; its full sequence is Calreticulin (416 aa).

A signal peptide spans 1-17 (MLLSVPLLLGLLGLAAA). The tract at residues 18–197 (DPAIYFKEQF…NSQVESGSLE (180 aa)) is N-domain. A Ca(2+)-binding site is contributed by Q26. At K48 the chain carries N6-acetyllysine. Residues K62 and K64 each coordinate Ca(2+). K64 is modified (N6-(2-hydroxyisobutyryl)lysine). An intrachain disulfide couples C105 to C137. 4 residues coordinate an alpha-D-glucoside: Y109, K111, Y128, and D135. K159 carries the N6-acetyllysine modification. One copy of the 1-1 repeat lies at 191-202 (VESGSLEDDWDF). The 4 X approximate repeats stretch occupies residues 191-255 (VESGSLEDDW…DAKKPEDWDE (65 aa)). Residues 193–277 (SGSLEDDWDF…NPEYKGEWKP (85 aa)) are disordered. Positions 198–308 (DDWDFLPPKK…YSPDANIYAY (111 aa)) are P-domain. Basic and acidic residues predominate over residues 207 to 251 (KIKDPDAAKPEDWDERAKIDDPTDSKPEDWDKPEHIPDPDAKKPE). N6-acetyllysine is present on K209. A run of 6 repeats spans residues 210–221 (DPDAAKPEDWDE), 227–238 (DPTDSKPEDWDK), 244–255 (DPDAKKPEDWDE), 259–269 (GEWEPPVIQNP), 273–283 (GEWKPRQIDNP), and 287–297 (GTWIHPEIDNP). Residues 237–270 (DKPEHIPDPDAKKPEDWDEEMDGEWEPPVIQNPE) are interaction with PPIB. Acidic residues predominate over residues 252-261 (DWDEEMDGEW). Positions 259–297 (GEWEPPVIQNPEYKGEWKPRQIDNPDYKGTWIHPEIDNP) are 3 X approximate repeats. A C-domain region spans residues 309–416 (DSFAVLGLDL…DATGQAKDEL (108 aa)). D317 is a binding site for an alpha-D-glucoside. D328 contacts Ca(2+). Residues 350–416 (TKAAEKQMKD…DATGQAKDEL (67 aa)) are disordered. A compositionally biased stretch (basic and acidic residues) spans 352-379 (AAEKQMKDKQDEEQRLKEEEEDKKRKEE). Residues 380 to 408 (EEAEDKEDEDDRDEDEDEEDEKEEDEEDA) are compositionally biased toward acidic residues. The short motif at 413–416 (KDEL) is the Prevents secretion from ER element.

Belongs to the calreticulin family. Monomer. Component of an EIF2 complex at least composed of CELF1/CUGBP1, CALR, CALR3, EIF2S1, EIF2S2, HSP90B1 and HSPA5. Interacts with GABARAP, NR3C1 and TRIM21. Interacts with PPIB and SPACA9. Interacts (via P-domain) with PDIA5. Interacts with PDIA3/ERp57. Interacts with CLCC1. In terms of tissue distribution, predentin and odontoblast.

The protein resides in the endoplasmic reticulum lumen. The protein localises to the cytoplasm. Its subcellular location is the cytosol. It is found in the secreted. It localises to the extracellular space. The protein resides in the extracellular matrix. The protein localises to the cell surface. Its subcellular location is the sarcoplasmic reticulum lumen. It is found in the cytoplasmic vesicle. It localises to the secretory vesicle. The protein resides in the cortical granule. The protein localises to the cytolytic granule. Its function is as follows. Calcium-binding chaperone that promotes folding, oligomeric assembly and quality control in the endoplasmic reticulum (ER) via the calreticulin/calnexin cycle. This lectin interacts transiently with almost all of the monoglucosylated glycoproteins that are synthesized in the ER. Interacts with the DNA-binding domain of NR3C1 and mediates its nuclear export. Involved in maternal gene expression regulation. May participate in oocyte maturation via the regulation of calcium homeostasis. Present in the cortical granules of non-activated oocytes, is exocytosed during the cortical reaction in response to oocyte activation and might participate in the block to polyspermy. This is Calreticulin (Calr) from Rattus norvegicus (Rat).